The following is a 270-amino-acid chain: UPF0354 protein BCE_4835 (270 aa).

It belongs to the UPF0354 family.

This Bacillus cereus (strain ATCC 10987 / NRS 248) protein is UPF0354 protein BCE_4835.